The primary structure comprises 102 residues: Polymeric immunoglobulin receptor (102 aa).

As to quaternary structure, interacts (mainly via CDR1-like domain) with dimeric IgA. Interacts (mainly via CDR2-like domain) with pentameric IgM. Either free or part of the secretory IgA (sIgA) complex that consists of two, four or five IgA monomers, and two additional non-Ig polypeptides, namely the JCHAIN and the secretory component (the proteolytic product of PIGR). Free secretory component interacts with bacterial antigens toxA of C.difficile and eaeA of E.coli. Post-translationally, N-glycosylated. N-glycosylation is required for anchoring IgA molecules to mucus, but is not necessary for Ig binding.

It localises to the cell membrane. It is found in the secreted. In terms of biological role, mediates selective transcytosis of polymeric IgA and IgM across mucosal epithelial cells. Binds polymeric IgA and IgM at the basolateral surface of epithelial cells. The complex is then transported across the cell to be secreted at the apical surface. During this process, a cleavage occurs that separates the extracellular (known as the secretory component) from the transmembrane segment. Through its N-linked glycans ensures anchoring of secretory IgA (sIgA) molecules to mucus lining the epithelial surface to neutralize extracellular pathogens. On its own (free form) may act as a non-specific microbial scavenger to prevent pathogen interaction with epithelial cells. This is Polymeric immunoglobulin receptor (PIGR) from Sus scrofa (Pig).